Here is a 735-residue protein sequence, read N- to C-terminus: Ribosomal RNA large subunit methyltransferase K/L (735 aa).

Positions 45-156 (DGYRACLWSR…RDSLSFSLDL (112 aa)) constitute a THUMP domain.

Belongs to the methyltransferase superfamily. RlmKL family.

Its subcellular location is the cytoplasm. The enzyme catalyses guanosine(2445) in 23S rRNA + S-adenosyl-L-methionine = N(2)-methylguanosine(2445) in 23S rRNA + S-adenosyl-L-homocysteine + H(+). It carries out the reaction guanosine(2069) in 23S rRNA + S-adenosyl-L-methionine = N(2)-methylguanosine(2069) in 23S rRNA + S-adenosyl-L-homocysteine + H(+). In terms of biological role, specifically methylates the guanine in position 2445 (m2G2445) and the guanine in position 2069 (m7G2069) of 23S rRNA. The protein is Ribosomal RNA large subunit methyltransferase K/L of Allochromatium vinosum (strain ATCC 17899 / DSM 180 / NBRC 103801 / NCIMB 10441 / D) (Chromatium vinosum).